The chain runs to 580 residues: Arginine--tRNA ligase (580 aa).

Residues 127–137 carry the 'HIGH' region motif; that stretch reads PNLAKEMHVGH.

The protein belongs to the class-I aminoacyl-tRNA synthetase family. As to quaternary structure, monomer.

It localises to the cytoplasm. It carries out the reaction tRNA(Arg) + L-arginine + ATP = L-arginyl-tRNA(Arg) + AMP + diphosphate. The protein is Arginine--tRNA ligase of Idiomarina loihiensis (strain ATCC BAA-735 / DSM 15497 / L2-TR).